Consider the following 512-residue polypeptide: Ferrochelatase-2, chloroplastic (512 aa).

The interval 1–32 is disordered; that stretch reads MNCPAMTASPSSSSSSSYSTFRPPPPLLPQLS. The N-terminal 83 residues, 1–83, are a transit peptide targeting the chloroplast; it reads MNCPAMTASP…SNPLNISSSS (83 aa). Residues 9–21 show a composition bias toward low complexity; the sequence is SPSSSSSSSYSTF. Val-84 is subject to N-acetylvaline.

The protein belongs to the ferrochelatase family. In terms of tissue distribution, expressed in leaves and flowers.

Its subcellular location is the plastid. It is found in the chloroplast membrane. It localises to the chloroplast thylakoid membrane. The enzyme catalyses heme b + 2 H(+) = protoporphyrin IX + Fe(2+). Its pathway is porphyrin-containing compound metabolism; protoheme biosynthesis; protoheme from protoporphyrin-IX: step 1/1. Functionally, catalyzes the last step of heme biosynthesis by inserting ferrous iron into protoporphyrin IX to produce protoheme. Produces heme for photosynthetic cytochromes, and for proteins involved in abiotic and biotic stress responses. May play a role in the quality control of individual chloroplasts during photo-oxidative stress through regulation of heme biosynthesis. The sequence is that of Ferrochelatase-2, chloroplastic from Arabidopsis thaliana (Mouse-ear cress).